Here is a 1175-residue protein sequence, read N- to C-terminus: Beta-agarase AgaO (1175 aa).

Positions 1-29 are cleaved as a signal peptide; that stretch reads MRLSKSQGILPLAHAVLAAAIAYSTAATA. The CBM6 1 domain maps to 32–164; the sequence is YRLEAEDFTN…QWNLDKMELA (133 aa). The interval 169 to 208 is disordered; it reads SSSSSGGGSTSSSSSGGSSSSSGSGSSSSGGSPEEGGHVS. The span at 178-200 shows a compositional bias: low complexity; it reads TSSSSSGGSSSSSGSGSSSSGGS. Residues 211–339 form the CBM6 2 domain; that stretch reads FKLEAESAHH…QFNIDYVIFE (129 aa). Positions 355-481 are disordered; sequence IADVNDSCPG…ESGCSPSQVA (127 aa). A compositionally biased stretch (basic and acidic residues) spans 382 to 393; that stretch reads DTDKDGIADNRD. A compositionally biased stretch (polar residues) spans 471-481; the sequence is NESGCSPSQVA. The active-site Proton donor is the Glu-661. Glu-832 serves as the catalytic Nucleophile.

Belongs to the glycosyl hydrolase 86 family.

The catalysed reaction is Hydrolysis of (1-&gt;4)-beta-D-galactosidic linkages in agarose, giving the tetramer as the predominant product.. Its activity is regulated as follows. Activity and stability are strongly enhanced by CaCl(2). Activity is not affected by sulfhydryl inhibitors such as iodoacetoamide and p-chloromercuribenzoate or by thiol reagents such as dithiothreitol and 2-mercaptoethanol. Strongly inhibited by N-bromosuccinimide and sodium dodecyl sulfate. Endo-type beta-agarase, which degrades agarose and agarose oligosaccharides more polymerized than hexamers to yield neoagarohexaose (NA6) as the main product, with lesser amounts of neoagarotetraose (NA4) and neoagarobiose (NA2). The polypeptide is Beta-agarase AgaO (Microbulbifer thermotolerans).